The sequence spans 311 residues: MSDELKDNAAKEASFGAFLTRQLMKSVPAVTGNLDGKVAIVTGANVGLGLACARQLLSLQLSHLILAVRSLRKGEAAALELQASFPHARVEVWALEMESYASIQAFVSRCHSELGRVDIAILNAGLALKRFQTCTNPQTTPREITLQVNFLSTVFLALLLLPILGAKKEKKDAVFIPGRLTLVGSDTVYWVNARELKSRPLLQAANSSEGFDGFEQYKMSKLFVLMFVAKLARDLVSPDQVIVNVACPGLCKGTAFVREPDSNWAKQAIVSSLIRLVGRTPEQGARVYLAAAILQGPKSHGSMISEGDILP.

Positions 48, 73, 96, 123, 217, and 221 each coordinate NADP(+). Tyr217 functions as the Proton donor in the catalytic mechanism. Lys221 serves as the catalytic Lowers pKa of active site Tyr.

The protein belongs to the short-chain dehydrogenases/reductases (SDR) family.

It participates in secondary metabolite biosynthesis. Functionally, short chain dehydrogenase; part of the gene cluster that mediates the biosynthesis of oxopyrrolidines, polyketide-amino acid hybrid compounds with feature structures of tetramic acid. Does not seem to play a role in oxopyrrolidines A and B biosynthesis. May be involved in further modifications of these oxopyrrolidines. This chain is Short chain dehydrogenase opdN, found in Penicillium oxalicum (strain 114-2 / CGMCC 5302) (Penicillium decumbens).